Reading from the N-terminus, the 555-residue chain is Glutamine--tRNA ligase (555 aa).

The short motif at 34–44 (PEPNGYLHIGH) is the 'HIGH' region element. Residues 35 to 37 (EPN) and 41 to 47 (HIGHAKS) each bind ATP. L-glutamine contacts are provided by aspartate 67 and tyrosine 212. Residues threonine 231, 261 to 262 (RL), and 269 to 271 (MSK) contribute to the ATP site. The short motif at 268–272 (VMSKR) is the 'KMSKS' region element. Positions 317–324 (TKQDNTIE) are interaction with tRNA.

The protein belongs to the class-I aminoacyl-tRNA synthetase family. In terms of assembly, monomer.

Its subcellular location is the cytoplasm. The enzyme catalyses tRNA(Gln) + L-glutamine + ATP = L-glutaminyl-tRNA(Gln) + AMP + diphosphate. The sequence is that of Glutamine--tRNA ligase from Enterobacter sp. (strain 638).